A 276-amino-acid chain; its full sequence is Putative hydroxypyruvate isomerase (276 aa).

Active-site proton donor/acceptor residues include Glu150 and Glu249.

The protein belongs to the hyi family.

The catalysed reaction is 3-hydroxypyruvate = 2-hydroxy-3-oxopropanoate. Functionally, catalyzes the reversible isomerization between hydroxypyruvate and 2-hydroxy-3-oxopropanoate (also termed tartronate semialdehyde). The sequence is that of Putative hydroxypyruvate isomerase (hyi) from Danio rerio (Zebrafish).